The chain runs to 908 residues: Protein translocase subunit SecA (908 aa).

ATP is bound by residues Gln-90, 108–112 (GEGKT), and Asp-503. Residues 846-864 (AAAAEAPVAPAPQPAAAAP) are compositionally biased toward low complexity. The interval 846–884 (AAAAEAPVAPAPQPAAAAPQPTPELVGAEAGEPDPAAWG) is disordered. Zn(2+) is bound by residues Cys-892, Cys-894, Cys-903, and His-904.

Belongs to the SecA family. In terms of assembly, monomer and homodimer. Part of the essential Sec protein translocation apparatus which comprises SecA, SecYEG and auxiliary proteins SecDF-YajC and YidC. Zn(2+) is required as a cofactor.

It localises to the cell inner membrane. It is found in the cytoplasm. The enzyme catalyses ATP + H2O + cellular proteinSide 1 = ADP + phosphate + cellular proteinSide 2.. Functionally, part of the Sec protein translocase complex. Interacts with the SecYEG preprotein conducting channel. Has a central role in coupling the hydrolysis of ATP to the transfer of proteins into and across the cell membrane, serving both as a receptor for the preprotein-SecB complex and as an ATP-driven molecular motor driving the stepwise translocation of polypeptide chains across the membrane. The chain is Protein translocase subunit SecA from Cereibacter sphaeroides (strain KD131 / KCTC 12085) (Rhodobacter sphaeroides).